Reading from the N-terminus, the 271-residue chain is MDTSMNFSRGLKMDLMQPYDFETFQDLRPFLEEYWVSSFLIVVVYLLLIVVGQTYMRTRKSFSLQRPLILWSFFLAIFSILGTLRMWKFMATVMFTVGLKQTVCFAIYTDDAVVRFWSFLFLLSKVVELGDTAFIILRKRPLIFVHWYHHSTVLLFTSFGYKNKVPSGGWFMTMNFGVHSVMYTYYTMKAAKLKHPNLLPMVITSLQILQMVLGTIFGILNYIWRQEKGCHTTTEHFFWSFMLYGTYFILFAHFFHRAYLRPKGKVASKSQ.

Asn6 is a glycosylation site (N-linked (GlcNAc...) asparagine). A run of 7 helical transmembrane segments spans residues 30–50, 67–87, 116–136, 141–161, 165–187, 199–219, and 236–256; these read FLEE…LLIV, PLIL…LRMW, FWSF…AFII, PLIF…SFGY, VPSG…TYYT, LPMV…IFGI, and HFFW…HFFH.

This sequence belongs to the ELO family. ELOVL3 subfamily. Interacts with TECR. N-Glycosylated. In terms of tissue distribution, expressed in brown adipose tissue and liver. In the skin, strong expressed in the cells of the inner layer of the outer root sheath of the hair follicles and in the sebocytes of the sebaceous glands. Hardly detectable in the epidermis and not at all in fibroblasts.

The protein resides in the endoplasmic reticulum membrane. It carries out the reaction a very-long-chain acyl-CoA + malonyl-CoA + H(+) = a very-long-chain 3-oxoacyl-CoA + CO2 + CoA. The enzyme catalyses eicosanoyl-CoA + malonyl-CoA + H(+) = 3-oxodocosanoyl-CoA + CO2 + CoA. The catalysed reaction is hexadecanoyl-CoA + malonyl-CoA + H(+) = 3-oxooctadecanoyl-CoA + CO2 + CoA. It catalyses the reaction octadecanoyl-CoA + malonyl-CoA + H(+) = 3-oxoeicosanoyl-CoA + CO2 + CoA. It carries out the reaction (9Z)-octadecenoyl-CoA + malonyl-CoA + H(+) = 3-oxo-(11Z)-eicosenoyl-CoA + CO2 + CoA. The enzyme catalyses (9Z,12Z)-octadecadienoyl-CoA + malonyl-CoA + H(+) = (11Z,14Z)-3-oxoicosa-11,14-dienoyl-CoA + CO2 + CoA. The catalysed reaction is (9Z,12Z,15Z)-octadecatrienoyl-CoA + malonyl-CoA + H(+) = (11Z,14Z,17Z)-3-oxoeicosatrienoyl-CoA + CO2 + CoA. It catalyses the reaction docosanoyl-CoA + malonyl-CoA + H(+) = 3-oxotetracosanoyl-CoA + CO2 + CoA. It carries out the reaction tetradecanoyl-CoA + malonyl-CoA + H(+) = 3-oxohexadecanoyl-CoA + CO2 + CoA. It functions in the pathway lipid metabolism; polyunsaturated fatty acid biosynthesis. Catalyzes the first and rate-limiting reaction of the four reactions that constitute the long-chain fatty acids elongation cycle. This endoplasmic reticulum-bound enzymatic process allows the addition of 2 carbons to the chain of long- and very long-chain fatty acids (VLCFAs) per cycle. Condensing enzyme that exhibits activity toward saturated and unsaturated acyl-CoA substrates with higher activity toward C18 acyl-CoAs, especially C18:0 acyl-CoAs. May participate in the production of saturated and monounsaturated VLCFAs of different chain lengths that are involved in multiple biological processes as precursors of membrane lipids and lipid mediators. Participates in the formation of certain VLCFA and triglycerides in certain cells of the hair follicles and the sebaceous glands, required for skin barrier function. Critical enzyme for lipid accumulation and metabolic activity in brown adipocytes during the early phase of the tissue recruitment. Plays a role in lipid storage and in resistance to diet-induced obesity. In Mus musculus (Mouse), this protein is Very long chain fatty acid elongase 3.